A 551-amino-acid polypeptide reads, in one-letter code: CTP synthase (551 aa).

The amidoligase domain stretch occupies residues 1–273; it reads MKNTTNTKRT…DSKILELLNI (273 aa). CTP is bound at residue Ser-21. Position 21 (Ser-21) interacts with UTP. Residues 22–27 and Asp-79 each bind ATP; that span reads SLGKGL. Residues Asp-79 and Glu-147 each contribute to the Mg(2+) site. CTP-binding positions include 154–156, 194–199, and Lys-230; these read DIE and KTKPTQ. Residues 194–199 and Lys-230 contribute to the UTP site; that span reads KTKPTQ. Residues 298–551 form the Glutamine amidotransferase type-1 domain; it reads TIAITGKYVD…ISAAVANKKG (254 aa). Gly-360 serves as a coordination point for L-glutamine. Catalysis depends on Cys-387, which acts as the Nucleophile; for glutamine hydrolysis. L-glutamine contacts are provided by residues 388–391, Glu-411, and Arg-479; that span reads LGMQ. Residues His-524 and Glu-526 contribute to the active site.

This sequence belongs to the CTP synthase family. In terms of assembly, homotetramer.

The enzyme catalyses UTP + L-glutamine + ATP + H2O = CTP + L-glutamate + ADP + phosphate + 2 H(+). It catalyses the reaction L-glutamine + H2O = L-glutamate + NH4(+). The catalysed reaction is UTP + NH4(+) + ATP = CTP + ADP + phosphate + 2 H(+). It functions in the pathway pyrimidine metabolism; CTP biosynthesis via de novo pathway; CTP from UDP: step 2/2. Its activity is regulated as follows. Allosterically activated by GTP, when glutamine is the substrate; GTP has no effect on the reaction when ammonia is the substrate. The allosteric effector GTP functions by stabilizing the protein conformation that binds the tetrahedral intermediate(s) formed during glutamine hydrolysis. Inhibited by the product CTP, via allosteric rather than competitive inhibition. In terms of biological role, catalyzes the ATP-dependent amination of UTP to CTP with either L-glutamine or ammonia as the source of nitrogen. Regulates intracellular CTP levels through interactions with the four ribonucleotide triphosphates. This is CTP synthase from Desulfotalea psychrophila (strain LSv54 / DSM 12343).